A 311-amino-acid chain; its full sequence is Thioredoxin reductase (311 aa).

FAD is bound by residues 15 to 18 (SGPA), 37 to 44 (EGTQFGGA), Asn53, and Val86. The cysteines at positions 137 and 140 are disulfide-linked. Positions 158, 177, 183, 240, and 260 each coordinate NADP(+). FAD is bound by residues Asp280 and 287-290 (RQAI). Residue Arg287 coordinates NADP(+).

This sequence belongs to the class-II pyridine nucleotide-disulfide oxidoreductase family. Homodimer. It depends on FAD as a cofactor.

Its subcellular location is the cytoplasm. The enzyme catalyses [thioredoxin]-dithiol + NADP(+) = [thioredoxin]-disulfide + NADPH + H(+). This chain is Thioredoxin reductase, found in Mycolicibacterium smegmatis (Mycobacterium smegmatis).